A 355-amino-acid chain; its full sequence is UDP-N-acetylglucosamine--N-acetylmuramyl-(pentapeptide) pyrophosphoryl-undecaprenol N-acetylglucosamine transferase (355 aa).

Residues 15-17, Asn-127, Arg-163, Ser-191, Ile-244, 263-268, and Gln-288 each bind UDP-N-acetyl-alpha-D-glucosamine; these read TGG and ALTVSE.

Belongs to the glycosyltransferase 28 family. MurG subfamily.

It localises to the cell inner membrane. It carries out the reaction di-trans,octa-cis-undecaprenyl diphospho-N-acetyl-alpha-D-muramoyl-L-alanyl-D-glutamyl-meso-2,6-diaminopimeloyl-D-alanyl-D-alanine + UDP-N-acetyl-alpha-D-glucosamine = di-trans,octa-cis-undecaprenyl diphospho-[N-acetyl-alpha-D-glucosaminyl-(1-&gt;4)]-N-acetyl-alpha-D-muramoyl-L-alanyl-D-glutamyl-meso-2,6-diaminopimeloyl-D-alanyl-D-alanine + UDP + H(+). Its pathway is cell wall biogenesis; peptidoglycan biosynthesis. Its function is as follows. Cell wall formation. Catalyzes the transfer of a GlcNAc subunit on undecaprenyl-pyrophosphoryl-MurNAc-pentapeptide (lipid intermediate I) to form undecaprenyl-pyrophosphoryl-MurNAc-(pentapeptide)GlcNAc (lipid intermediate II). The sequence is that of UDP-N-acetylglucosamine--N-acetylmuramyl-(pentapeptide) pyrophosphoryl-undecaprenol N-acetylglucosamine transferase from Salmonella dublin (strain CT_02021853).